Reading from the N-terminus, the 113-residue chain is Large ribosomal subunit protein bL19m (113 aa).

The protein belongs to the bacterial ribosomal protein bL19 family.

It localises to the mitochondrion. This Reclinomonas americana protein is Large ribosomal subunit protein bL19m (RPL19).